A 328-amino-acid polypeptide reads, in one-letter code: Malate dehydrogenase (328 aa).

Residue 11–17 (GAAGQIG) participates in NAD(+) binding. Arg94 and Arg100 together coordinate substrate. Residues Asn107, Gln114, and 131 to 133 (VGN) each bind NAD(+). Residues Asn133 and Arg164 each contribute to the substrate site. Residue His189 is the Proton acceptor of the active site.

It belongs to the LDH/MDH superfamily. MDH type 2 family.

The enzyme catalyses (S)-malate + NAD(+) = oxaloacetate + NADH + H(+). Functionally, catalyzes the reversible oxidation of malate to oxaloacetate. The sequence is that of Malate dehydrogenase from Acinetobacter baumannii (strain AB0057).